The primary structure comprises 570 residues: Structure-specific endonuclease subunit EME1 (570 aa).

Residues 1–14 (MALRRLSLSRLSTE) show a composition bias toward low complexity. The interval 1-86 (MALRRLSLSR…AGPVRVLSSS (86 aa)) is disordered. Ser-12 and Ser-15 each carry phosphoserine. Low complexity predominate over residues 68 to 79 (PSAAGAPPQAGP). Phosphoserine occurs at positions 84, 85, and 87. A Glycyl lysine isopeptide (Lys-Gly) (interchain with G-Cter in SUMO2) cross-link involves residue Lys-103. Ser-117 is modified (phosphoserine). Polar residues predominate over residues 118-130 (SLKTGLDGQNNAS). Disordered stretches follow at residues 118–147 (SLKT…PDVP), 185–231 (KTNS…ERKK), and 370–400 (RPQN…SSTG). Residues Lys-136 and Lys-142 each participate in a glycyl lysine isopeptide (Lys-Gly) (interchain with G-Cter in SUMO2) cross-link. Residues 218–231 (SRKENTPRQHERKK) are compositionally biased toward basic and acidic residues. The segment at 249-456 (KHIVVVLDPV…PFKKLRDQVT (208 aa)) is nuclease-like domain; forms the post-nick DNA binding interface and is involved in DNA recognition and bending. The helix-hairpin-helix (2HhH); forms the pre-nick DNA binding interface and is involved in DNA recognition and bending stretch occupies residues 476–570 (RGLALIWRRQ…QPDLILDSVD (95 aa)).

Belongs to the EME1/MMS4 family. Part of the heterodimeric MUS81-EME1 complex. In terms of tissue distribution, weakly expressed in brain, heart, kidney, liver, lung, muscle, skin, small intestine, spleen, stomach, testis and thymus. Expressed in bone marrow. Also expressed in embryonic stem cells (ES cells).

The protein resides in the nucleus. It is found in the nucleolus. Non-catalytic subunit of the structure-specific, heterodimeric DNA endonuclease MUS81-EME1 which is involved in the maintenance of genome stability. In the complex, EME1 is required for DNA cleavage, participating in DNA recognition and bending. MUS81-EME1 cleaves 3'-flaps and nicked Holliday junctions, and exhibit limited endonuclease activity with 5' flaps and nicked double-stranded DNAs. Active during prometaphase, MUS81-EME1 resolves mitotic recombination intermediates, including Holliday junctions, which form during homologous recombination. The sequence is that of Structure-specific endonuclease subunit EME1 from Mus musculus (Mouse).